Here is a 207-residue protein sequence, read N- to C-terminus: MATAADVDAEIQQALTNEVKLFNRWTYDDVTVTDISLVDYIGVQAAKHATFVPHTAGRYSVKRFRKAQCPIVERLTNSLMMHGRNNGKKLMAVRIVKHAMEIIHLLSDLNPIQVIIDAIVNSGPREDATRIGSAGVVRRQAVDISPLRRVNQAIFLITTGAREAAFRNIKTIAECLADELINAAKGSSNSYAIKKKDEIERVAKANR.

A2 is subject to N-acetylalanine.

This sequence belongs to the universal ribosomal protein uS7 family. In terms of tissue distribution, expressed in root tips, lateral root primordia, leaf primordia, shoot apical meristem and vasculature of cotyledons.

This Arabidopsis thaliana (Mouse-ear cress) protein is Small ribosomal subunit protein uS7y.